Here is a 962-residue protein sequence, read N- to C-terminus: DNA primase (962 aa).

Residues 894-932 form a CHC2-type zinc finger; it reads CLRARHARSPPARTFVALSVDAHDRLCISLSQQCFATKC.

The protein belongs to the herpesviridae DNA primase family. As to quaternary structure, associates with the helicase and the primase-associated factor to form the helicase-primase factor.

It is found in the host nucleus. Essential component of the helicase/primase complex. Unwinds the DNA at the replication forks and generates single-stranded DNA for both leading and lagging strand synthesis. The primase initiates primer synthesis and thereby produces large amount of short RNA primers on the lagging strand that the polymerase elongates using dNTPs. The polypeptide is DNA primase (UL52) (Sus scrofa (Pig)).